The chain runs to 769 residues: MLDSFKENEALRKYLFSGHFGLEKENIRVTSDGKLALTPHPAIFGPKEDNPYIKTDFSESQIEMITPVTDSIDAVYEWLENLHNIVSLRAENELLWPSSNPPILPAEEDIPIAEYKTPDSPDRKYREHLAKGYGKKIQLLSGIHYNFSFPEALIDGLYAEISHPNESKRDFKNRLYLKVAKYFMKNRWLLIYLTGASPVYLADFTKTNSEEVLNDGSKALHRGISLRNSNAGYKNKESLFVDYNSFDAYISSISNYIEAGKIESMREFYNPIRLKNAHTDQTVESLAKHGVEYLEIRSIDLNPLEPNGISKDELIFIHLFLIKGLLSEDRELCANNQQLADENENNIALNGLAQPAIKNCDNEEMSLADAGLLELDKMSDFIQSLIPNDNHFQAIIEKQKERLLHPEKTIAAQVQAQSAKEGYVEFHLNQAKTYMEETEALAYKLVGAEDMELSTQIIWKDAIARGIKVDVLDRAENFLRFQKGDHVEYVKQASKTSKDNYVSVLMMENKVVTKLVLAEHGIRVPFGDSFSDQALALEAFSLFEDKQIVVKPKSTNYGWGISIFKNKFTLEDYQEALNIAFSYDSSVIIEEFIPGDEFRFLVINDKVEAVLKRVPANVTGDGIHTVRQLVEEKNTDPLRGTDHLKPLEKIRTGPEETLMLSMQNLSWDSIPKAEEIIYLRENSNVSTGGDSIDYTEEMDDYFKEIAIRATQVLDAKICGVDIIVPRETIDRDKHAIIELNFNPAMHMHCFPYQGEKKKIGDKILDFLFE.

The glutamate--cysteine ligase stretch occupies residues 1–347 (MLDSFKENEA…QLADENENNI (347 aa)). Residues 514-768 (KLVLAEHGIR…IGDKILDFLF (255 aa)) form the ATP-grasp domain. 541-599 (SLFEDKQIVVKPKSTNYGWGISIFKNKFTLEDYQEALNIAFSYDSSVIIEEFIPGDEFR) contributes to the ATP binding site. The Mg(2+) site is built by aspartate 721, glutamate 738, and asparagine 740. Mn(2+) contacts are provided by aspartate 721, glutamate 738, and asparagine 740.

The protein in the N-terminal section; belongs to the glutamate--cysteine ligase type 1 family. Type 2 subfamily. As to quaternary structure, monomer. The cofactor is Mg(2+). Mn(2+) is required as a cofactor.

It carries out the reaction L-cysteine + L-glutamate + ATP = gamma-L-glutamyl-L-cysteine + ADP + phosphate + H(+). The catalysed reaction is gamma-L-glutamyl-L-cysteine + glycine + ATP = glutathione + ADP + phosphate + H(+). It participates in sulfur metabolism; glutathione biosynthesis; glutathione from L-cysteine and L-glutamate: step 1/2. The protein operates within sulfur metabolism; glutathione biosynthesis; glutathione from L-cysteine and L-glutamate: step 2/2. Synthesizes glutathione from L-glutamate and L-cysteine via gamma-L-glutamyl-L-cysteine. In Listeria innocua serovar 6a (strain ATCC BAA-680 / CLIP 11262), this protein is Glutathione biosynthesis bifunctional protein GshAB.